Here is a 265-residue protein sequence, read N- to C-terminus: Expansin-like A1 (265 aa).

The first 20 residues, 1-20 (MGSFLFLIVVIFLFSSSVNA), serve as a signal peptide directing secretion. Residues 41-147 (SGACAYGSMA…QRVPCDYGNK (107 aa)) form the Expansin-like EG45 domain. The helical transmembrane segment at 42–62 (GACAYGSMATSFFAGHIAAAI) threads the bilayer. Asn-99 and Asn-102 each carry an N-linked (GlcNAc...) asparagine glycan. Residues 161–244 (NYLEIKLLYQ…NWEAGKIYDA (84 aa)) enclose the Expansin-like CBD domain.

This sequence belongs to the expansin family. Expansin-like A subfamily.

Its subcellular location is the membrane. The polypeptide is Expansin-like A1 (EXLA1) (Arabidopsis thaliana (Mouse-ear cress)).